A 582-amino-acid polypeptide reads, in one-letter code: MFPAGPPSHSLLRLPLLQLLLLVVQAVGRGLGRASPAGGPLEDVVIERYHIPRACPREVQMGDFVRYHYNGTFEDGKKFDSSYDRNTLVAIVVGVGRLITGMDRGLMGMCVNERRRLIVPPHLGYGSIGLAGLIPPDATLYFDVVLLDVWNKEDTVQVSTLLRPPHCPRMVQDGDFVRYHYNGTLLDGTSFDTSYSKGGTYDTYVGSGWLIKGMDQGLLGMCPGERRKIIIPPFLAYGEKGYGTVIPPQASLVFHVLLIDVHNPKDAVQLETLELPPGCVRRAGAGDFMRYHYNGSLMDGTLFDSSYSRNHTYNTYIGQGYIIPGMDQGLQGACMGERRRITIPPHLAYGENGTGDKIPGSAVLIFNVHVIDFHNPADVVEIRTLSRPSETCNETTKLGDFVRYHYNCSLLDGTQLFTSHDYGAPQEATLGANKVIEGLDTGLQGMCVGERRQLIVPPHLAHGESGARGVPGSAVLLFEVELVSREDGLPTGYLFVWHKDPPANLFEDMDLNKDGEVPPEEFSTFIKAQVSEGKGRLMPGQDPEKTIGDMFQNQDRNQDGKITVDELKLKSDEDEERVHEEL.

An N-terminal signal peptide occupies residues 1 to 26; that stretch reads MFPAGPPSHSLLRLPLLQLLLLVVQA. 3 consecutive PPIase FKBP-type domains span residues 62–150, 174–262, and 286–374; these read GDFV…LDVW, GDFV…IDVH, and GDFM…IDFH. N-linked (GlcNAc...) asparagine glycosylation is found at asparagine 70, asparagine 182, asparagine 294, asparagine 310, asparagine 352, asparagine 393, and asparagine 407. In terms of domain architecture, PPIase FKBP-type 4 spans 399 to 486; that stretch reads GDFVRYHYNC…LFEVELVSRE (88 aa). 2 consecutive EF-hand domains span residues 497–532 and 542–577; these read WHKDPPANLFEDMDLNKDGEVPPEEFSTFIKAQVSE and DPEKTIGDMFQNQDRNQDGKITVDELKLKSDEDEER. The Ca(2+) site is built by aspartate 510, asparagine 512, aspartate 514, glutamate 516, glutamate 521, aspartate 555, asparagine 557, aspartate 559, lysine 561, and glutamate 566. Residues 533 to 582 are disordered; sequence GKGRLMPGQDPEKTIGDMFQNQDRNQDGKITVDELKLKSDEDEERVHEEL. The segment covering 556 to 582 has biased composition (basic and acidic residues); it reads RNQDGKITVDELKLKSDEDEERVHEEL. A Prevents secretion from ER motif is present at residues 579 to 582; it reads HEEL.

Glycosylated and phosphorylated.

It is found in the endoplasmic reticulum lumen. The catalysed reaction is [protein]-peptidylproline (omega=180) = [protein]-peptidylproline (omega=0). Its activity is regulated as follows. Inhibited by both FK506 and rapamycin, but not by cyclosporin A. In terms of biological role, PPIases accelerate the folding of proteins during protein synthesis. In Homo sapiens (Human), this protein is Peptidyl-prolyl cis-trans isomerase FKBP10 (FKBP10).